We begin with the raw amino-acid sequence, 255 residues long: MILVIDVGNTNTVFGVYDGKKLLNHWRMETSKGKTSDEYGMFIVSLLSYEKIDVGKIEAVVIASVVPPIMYSLEHAIRKYFKLEPMVVGPGIKTGINIKYENPREVGADRIINAVAALELYGGPLIIVDFGTATTFCAVSSKGEYLGGVICPGIKISAEALFQKTAKLPKIDLVKPETVIGRNTVSSMQSGIIYGYVGEVDYIVRRMKKEMKEDNIKVIATGGLARLIASESETIDEINGLLTLEGLRIIYERNK.

6-13 (DVGNTNTV) provides a ligand contact to ATP. Substrate contacts are provided by residues Tyr100 and 107–110 (GADR). Residue Asp109 is the Proton acceptor of the active site. Asp129 contacts K(+). ATP is bound at residue Thr132. Thr184 serves as a coordination point for substrate.

The protein belongs to the type III pantothenate kinase family. Homodimer. It depends on NH4(+) as a cofactor. K(+) serves as cofactor.

Its subcellular location is the cytoplasm. The catalysed reaction is (R)-pantothenate + ATP = (R)-4'-phosphopantothenate + ADP + H(+). The protein operates within cofactor biosynthesis; coenzyme A biosynthesis; CoA from (R)-pantothenate: step 1/5. Functionally, catalyzes the phosphorylation of pantothenate (Pan), the first step in CoA biosynthesis. The sequence is that of Type III pantothenate kinase from Acetivibrio thermocellus (strain ATCC 27405 / DSM 1237 / JCM 9322 / NBRC 103400 / NCIMB 10682 / NRRL B-4536 / VPI 7372) (Clostridium thermocellum).